A 766-amino-acid polypeptide reads, in one-letter code: MALAHNLGFPRIGRDRELKKAQEAFWKGELDEAGLRKVGRDLRAAHWQAQKDAGIELLPVGDFAWYDQVLTHSLTFGVIPERFRGHDGAKPTLQTLFAMARGVATGRSANCCGGAHAQEMTKWFDTNYHYLVPEFTVDQQFALSWEQLFEEVDEAKALGHAAKPVVIGPLTYLWLGKAKGGDFDKLELLDRLLPVYDEILNRLAGQGVEWVQIDEPILVLDLPQEWKNAYERVYNILQRAPLKKLVATYFGGLEENLGLAANLPVDGLHIDLVRAPEQYPTILDRLPAYKILSLGLVNGRNVWACDLEKAVDVLRHAAERLGDRLWVAPSCSLLHSPVDLGREDQLDTELKSWLAFAVQKCQEVAVLAKAVNQPDAAEVAAALARSRAIQAGRASSPRIHKPAVQARVHAIKPGDSQRQSAFGQRIAKQRAGLNLPAYPTTTIGSFPQTPAIRLARQAFKQGKLTEADYVEAMHSEIRHAVQIQENLGLDVLVHGEAERNDMVEYFAEQLDGYVFTRFGWVQSYGSRCVKPAVIYGDLSRPEAMTVAWIRYAQGLTRKVMKGMLTGPVTMLMWSFPREDVSRETQARQLALAIRDEVLDLEAADIKIVQIDEAAFREGLPLRRSAWPAYLEWATEAFRLCASGVRDETQIHTHMCYSEFNDVIESIAAMDADVITIETSRSDMELLEAFEKFDYPNEIGPGVYDIHSPRVPSREEMVKLLRKAALRIPAERLWVNPDCGLKTRAWPETEAALVNMVAAARELRATA.

Residues 16–19 and Lys122 contribute to the 5-methyltetrahydropteroyltri-L-glutamate site; that span reads RELK. L-homocysteine contacts are provided by residues 443–445 and Glu496; that span reads IGS. L-methionine is bound by residues 443–445 and Glu496; that span reads IGS. Residues 527–528 and Trp573 each bind 5-methyltetrahydropteroyltri-L-glutamate; that span reads RC. Asp611 contacts L-homocysteine. Asp611 contributes to the L-methionine binding site. Residue Glu617 coordinates 5-methyltetrahydropteroyltri-L-glutamate. Zn(2+) is bound by residues His653, Cys655, and Glu677. His706 serves as the catalytic Proton donor. Zn(2+) is bound at residue Cys738.

Belongs to the vitamin-B12 independent methionine synthase family. It depends on Zn(2+) as a cofactor.

The enzyme catalyses 5-methyltetrahydropteroyltri-L-glutamate + L-homocysteine = tetrahydropteroyltri-L-glutamate + L-methionine. It functions in the pathway amino-acid biosynthesis; L-methionine biosynthesis via de novo pathway; L-methionine from L-homocysteine (MetE route): step 1/1. In terms of biological role, catalyzes the transfer of a methyl group from 5-methyltetrahydrofolate to homocysteine resulting in methionine formation. The polypeptide is 5-methyltetrahydropteroyltriglutamate--homocysteine methyltransferase (Pseudomonas putida (strain W619)).